Reading from the N-terminus, the 299-residue chain is Nucleotide-binding protein glr4163 (299 aa).

ATP is bound at residue 18-25; the sequence is SPAGAGRT.

The protein belongs to the RapZ-like family.

Displays ATPase and GTPase activities. This Gloeobacter violaceus (strain ATCC 29082 / PCC 7421) protein is Nucleotide-binding protein glr4163.